The following is a 152-amino-acid chain: Transcriptional regulator MraZ (152 aa).

SpoVT-AbrB domains follow at residues 5–52 (VNQL…PLPE) and 81–124 (AQEL…DESL).

The protein belongs to the MraZ family. In terms of assembly, forms oligomers.

The protein localises to the cytoplasm. It localises to the nucleoid. This Halorhodospira halophila (strain DSM 244 / SL1) (Ectothiorhodospira halophila (strain DSM 244 / SL1)) protein is Transcriptional regulator MraZ.